Here is a 480-residue protein sequence, read N- to C-terminus: Uridine 5'-monophosphate synthase (480 aa).

The residue at position 2 (A2) is an N-acetylalanine. The tract at residues 2–214 is OPRTase; that stretch reads AAVGAALGPL…VFVAANHNGS (213 aa). Y37 carries the phosphotyrosine modification. S214 bears the Phosphoserine mark. The tract at residues 215–220 is domain linker; that stretch reads PLSIKE. The segment at 221–480 is OMPdecase; sequence APKELSFSAR…WEAYLSRLGV (260 aa). S257 is a binding site for orotidine 5'-phosphate. Residues S257, D259, and 281–283 contribute to the UMP site; that span reads KTH. Orotidine 5'-phosphate is bound by residues K281, K314, D317, T321, S372, 430 to 432, and 450 to 451; these read QQY and GR. Active-site for OMPdecase activity residues include K314 and D317. UMP-binding positions include D317, T321, S372, 430–432, and 450–451; these read QQY and GR.

In the N-terminal section; belongs to the purine/pyrimidine phosphoribosyltransferase family. The protein in the C-terminal section; belongs to the OMP decarboxylase family. Homodimer; dimerization is required for enzymatic activity.

The enzyme catalyses orotidine 5'-phosphate + diphosphate = orotate + 5-phospho-alpha-D-ribose 1-diphosphate. The catalysed reaction is orotidine 5'-phosphate + H(+) = UMP + CO2. Its pathway is pyrimidine metabolism; UMP biosynthesis via de novo pathway; UMP from orotate: step 1/2. It functions in the pathway pyrimidine metabolism; UMP biosynthesis via de novo pathway; UMP from orotate: step 2/2. Its function is as follows. Bifunctional enzyme catalyzing the last two steps of de novo pyrimidine biosynthesis, orotate phosphoribosyltransferase (OPRT), which converts orotate to orotidine-5'-monophosphate (OMP), and orotidine-5'-monophosphate decarboxylase (ODC), the terminal enzymatic reaction that decarboxylates OMP to uridine monophosphate (UMP). This is Uridine 5'-monophosphate synthase (UMPS) from Pongo abelii (Sumatran orangutan).